Reading from the N-terminus, the 105-residue chain is uncharacterized protein (105 aa).

Its subcellular location is the plastid. This is an uncharacterized protein from Euglena longa (Euglenophycean alga).